The following is a 328-amino-acid chain: uncharacterized protein (328 aa).

Residues 1–25 (MKLFNFKKLSMLIAGFTLVTSPALA) form the signal peptide.

The protein belongs to the bacterial solute-binding protein 7 family.

The protein localises to the periplasm. This is an uncharacterized protein from Haemophilus influenzae (strain ATCC 51907 / DSM 11121 / KW20 / Rd).